The following is a 712-amino-acid chain: Protein SDA1 homolog (712 aa).

Thr-234 bears the Phosphothreonine mark. At Ser-236 the chain carries Phosphoserine. Disordered regions lie at residues 488–573 (TIDI…DMRI) and 662–712 (VNEH…KKMK). Acidic residues-rich tracts occupy residues 491–501 (IESEDDTDSND) and 516–559 (GADD…ESGE). The segment covering 560 to 572 (ESAKAKKEKKDMR) has biased composition (basic and acidic residues). Basic residues-rich tracts occupy residues 671–692 (REKR…KVKK) and 700–712 (ALRK…KKMK).

This sequence belongs to the SDA1 family.

It is found in the nucleus. Its subcellular location is the nucleolus. In terms of biological role, required for 60S pre-ribosomal subunits export to the cytoplasm. This is Protein SDA1 homolog (Mys45A) from Drosophila melanogaster (Fruit fly).